We begin with the raw amino-acid sequence, 326 residues long: MSSVINVLFVVLVFVPSIYSAPPPNLTKDYYQKTCPDFNKIVRETVTPKQGQQPTTAAGTLRLFFHDCFMEGCDASVLIATNSFNKAERDDDLNESLPGDAFDIVTRIKTALELSCPGVVSCADILAQATRDLVTMVGGPFYEVKLGRKDGFESKAHKVKGNLPLANQSVPDMLSIFKKNGFTLKELVALSGGHTIGFSHCKEFSNRIFPKVDPELNAKFAGVLKDLCKNFETNKTMAAFLDPVTPGKFDNMYFKNLKRGLGLLASDHILFKDPSTRPFVELYANNQTAFFEDFARAMEKLGRVGVKGEKDGEVRRRCDHFNKLNV.

Positions 1–20 (MSSVINVLFVVLVFVPSIYS) are cleaved as a signal peptide. N-linked (GlcNAc...) asparagine glycosylation is present at Asn-25. Cystine bridges form between Cys-35–Cys-116, Cys-68–Cys-73, Cys-122–Cys-318, and Cys-201–Cys-228. The active-site Proton acceptor is the His-66. Ca(2+) contacts are provided by Asp-67, Gly-72, Asp-74, and Ser-76. Pro-164 contacts substrate. An N-linked (GlcNAc...) asparagine glycan is attached at Asn-167. His-194 provides a ligand contact to heme b. Position 195 (Thr-195) interacts with Ca(2+). Asn-234 is a glycosylation site (N-linked (GlcNAc...) asparagine). Asp-242, Thr-245, and Asp-250 together coordinate Ca(2+). A glycan (N-linked (GlcNAc...) asparagine) is linked at Asn-286.

This sequence belongs to the peroxidase family. Classical plant (class III) peroxidase subfamily. Heme b serves as cofactor. Requires Ca(2+) as cofactor.

It is found in the secreted. It carries out the reaction 2 a phenolic donor + H2O2 = 2 a phenolic radical donor + 2 H2O. Its function is as follows. Removal of H(2)O(2), oxidation of toxic reductants, biosynthesis and degradation of lignin, suberization, auxin catabolism, response to environmental stresses such as wounding, pathogen attack and oxidative stress. These functions might be dependent on each isozyme/isoform in each plant tissue. The protein is Peroxidase 41 (PER41) of Arabidopsis thaliana (Mouse-ear cress).